Consider the following 1321-residue polypeptide: Lysine-specific demethylase 3A (1321 aa).

Phosphoserine is present on residues S264 and S325. Disordered stretches follow at residues 307–336, 383–402, and 438–472; these read ATPPSKDPRQQSTPQAANSPPNLGAKIPQG, LTEPKGSCTQPKTNTDQENR, and KHLEHAPSPSDVSNAPEVKAGVNSDSPNNCSGKKV. Over residues 316-327 the composition is skewed to polar residues; the sequence is QQSTPQAANSPP. S445 carries the phosphoserine modification. Residues 662 to 687 form a C6-type zinc finger; the sequence is CDVCDTTIFNLHWVCPRCGFGVCVDC. The residue at position 766 (S766) is a Phosphoserine. An LXXLL motif motif is present at residues 885–889; it reads LRNLL. K895 is modified (N6-acetyllysine). The JmjC domain maps to 1058–1281; it reads MPSRFDDLMA…HCFWLTQEFR (224 aa). 3 residues coordinate Fe cation: H1120, D1122, and H1249.

It belongs to the JHDM2 histone demethylase family. Interacts with VRK1. It depends on Fe(2+) as a cofactor.

Its subcellular location is the cytoplasm. It is found in the nucleus. The catalysed reaction is N(6),N(6)-dimethyl-L-lysyl(9)-[histone H3] + 2 2-oxoglutarate + 2 O2 = L-lysyl(9)-[histone H3] + 2 formaldehyde + 2 succinate + 2 CO2. Its function is as follows. Histone demethylase that specifically demethylates 'Lys-9' of histone H3, thereby playing a central role in histone code. Preferentially demethylates mono- and dimethylated H3 'Lys-9' residue, with a preference for dimethylated residue, while it has weak or no activity on trimethylated H3 'Lys-9'. Demethylation of Lys residue generates formaldehyde and succinate. Involved in hormone-dependent transcriptional activation, by participating in recruitment to androgen-receptor target genes, resulting in H3 'Lys-9' demethylation and transcriptional activation. Involved in spermatogenesis by regulating expression of target genes such as PRM1 and TNP1 which are required for packaging and condensation of sperm chromatin. Involved in obesity resistance through regulation of metabolic genes such as PPARA and UCP1. The polypeptide is Lysine-specific demethylase 3A (KDM3A) (Homo sapiens (Human)).